The sequence spans 314 residues: Mitochondrial MRF1 N(5)-glutamine methyltransferase MTQ1 (314 aa).

S-adenosyl-L-methionine is bound by residues 118-122, Asp141, and Asn188; that span reads FTGTG. Residue 188–191 participates in substrate binding; sequence NPPY.

The protein belongs to the protein N5-glutamine methyltransferase family.

The protein localises to the mitochondrion. The enzyme catalyses L-glutaminyl-[peptide chain release factor] + S-adenosyl-L-methionine = N(5)-methyl-L-glutaminyl-[peptide chain release factor] + S-adenosyl-L-homocysteine + H(+). Functionally, methylates MRF1 on 'Gln-287' using S-adenosyl L-methionine as methyl donor. This chain is Mitochondrial MRF1 N(5)-glutamine methyltransferase MTQ1 (MTQ1), found in Saccharomyces cerevisiae (strain ATCC 204508 / S288c) (Baker's yeast).